The primary structure comprises 253 residues: Ferritin-2, chloroplastic (253 aa).

Residues 1-45 constitute a chloroplast transit peptide; the sequence is MLHKASPALSLLSSGYTGGGNLFPPSRNSSNLLFSPSGSRFSVQA. The extension peptide (EP) stretch occupies residues 46 to 82; the sequence is AKGTNTKSLTGVVFEPFEEVKKEMELVPTTPFVSLAR. Positions 83-236 constitute a Ferritin-like diiron domain; sequence HKFSDDSESA…EYVAQLRRIG (154 aa). Residues glutamate 100, glutamate 135, histidine 138, glutamate 184, and glutamine 218 each contribute to the Fe cation site.

Belongs to the ferritin family. As to quaternary structure, oligomer of 24 subunits. There are two types of subunits: L (light) chain and H (heavy) chain. The major chain can be light or heavy, depending on the species and tissue type. The functional molecule forms a roughly spherical shell with a diameter of 12 nm and contains a central cavity into which the insoluble mineral iron core is deposited.

It localises to the plastid. The protein resides in the chloroplast. The enzyme catalyses 4 Fe(2+) + O2 + 4 H(+) = 4 Fe(3+) + 2 H2O. Its function is as follows. Stores iron in a soluble, non-toxic, readily available form. Important for iron homeostasis. Has ferroxidase activity. Iron is taken up in the ferrous form and deposited as ferric hydroxides after oxidation. This chain is Ferritin-2, chloroplastic (FER2), found in Arabidopsis thaliana (Mouse-ear cress).